The sequence spans 164 residues: Respiratory growth induced protein 2 (164 aa).

This sequence belongs to the RGI1 family.

The protein resides in the cytoplasm. Functionally, involved in the control of energetic metabolism and significantly contribute to cell fitness, especially under respiratory growth conditions. The protein is Respiratory growth induced protein 2 (RGI2) of Saccharomyces cerevisiae (strain JAY291) (Baker's yeast).